The chain runs to 221 residues: 7-cyano-7-deazaguanine synthase (221 aa).

10-20 (FSGGQDSTTCL) provides a ligand contact to ATP. Residues cysteine 186, cysteine 195, cysteine 198, and cysteine 201 each coordinate Zn(2+).

It belongs to the QueC family. In terms of assembly, homodimer. Zn(2+) serves as cofactor.

The catalysed reaction is 7-carboxy-7-deazaguanine + NH4(+) + ATP = 7-cyano-7-deazaguanine + ADP + phosphate + H2O + H(+). The protein operates within purine metabolism; 7-cyano-7-deazaguanine biosynthesis. Catalyzes the ATP-dependent conversion of 7-carboxy-7-deazaguanine (CDG) to 7-cyano-7-deazaguanine (preQ(0)). This is 7-cyano-7-deazaguanine synthase from Anoxybacillus flavithermus (strain DSM 21510 / WK1).